The following is a 248-amino-acid chain: PF03932 family protein CutC (248 aa).

This sequence belongs to the CutC family. In terms of assembly, homodimer.

Its subcellular location is the cytoplasm. The polypeptide is PF03932 family protein CutC (Salmonella heidelberg (strain SL476)).